A 618-amino-acid polypeptide reads, in one-letter code: Sodium/iodide cotransporter (618 aa).

Residues 1–14 are Extracellular-facing; it reads MEGAEAGARATFGP. A helical transmembrane segment spans residues 15 to 31; that stretch reads WDYGVFATMLLVSTGIG. Residues 32 to 56 are Cytoplasmic-facing; it reads LWVGLARGGQRSADDFFTGGRQLAA. The chain crosses the membrane as a discontinuously helical span at residues 57–80; that stretch reads VPVGLSLAASFMSAVQVLGVPAEA. Residues Ser69, Val71, and Gln72 each coordinate Na(+). Val76 contributes to the iodide binding site. Residues 81–84 lie on the Extracellular side of the membrane; the sequence is ARYG. A helical membrane pass occupies residues 85 to 105; it reads LKFLWMCVGQLLNSLLTALLF. An iodide-binding site is contributed by Met90. Over 106-130 the chain is Cytoplasmic; the sequence is LPIFYRLGLTSTYQYLELRFSRAVR. The chain crosses the membrane as a helical span at residues 131-157; sequence LCGTLQYLVATMLYTGIVIYAPALILN. Tyr144 contributes to the Na(+) binding site. Over 158–163 the chain is Extracellular; sequence QVTGLD. Residues 164–181 traverse the membrane as a helical segment; it reads IWASLLSTGIICTLYTTV. Over 182 to 189 the chain is Cytoplasmic; that stretch reads GGMKAVVW. A helical membrane pass occupies residues 190–208; sequence TDVFQVVVMLVGFWVILAR. Over 209 to 243 the chain is Extracellular; sequence GVMLMGGPWNVLSLAQNHSRINLMDFDPDPRSRYT. Residues 244 to 266 traverse the membrane as a discontinuously helical segment; the sequence is FWTFVVGGSLVWLSMYGVNQAQV. Trp255 contributes to the iodide binding site. Residue Met258 coordinates Na(+). The Cytoplasmic segment spans residues 267-278; that stretch reads QRYVACHTERKA. Residues 279-301 form a helical membrane-spanning segment; sequence KLALLVNQLGLFLIVASAACCGI. Residues 302-335 are Extracellular-facing; the sequence is VMFVYYKDCDPLLTGRIAAPDQYMPLLVLDIFED. Residues 336-363 traverse the membrane as a helical segment; it reads LPGVPGLFLACAYSGTLSTASTSINAMA. Topologically, residues 364–386 are cytoplasmic; the sequence is AVTVEDLIKPRMPSLAPRKLVFI. Residues 387–408 traverse the membrane as a helical segment; it reads SKGLSFIYGSTCLTVAALSSLL. The Extracellular segment spans residues 409–411; sequence GGG. Residues 412-437 form a helical membrane-spanning segment; that stretch reads VLQGSFTVMGVISGPLLGAFTLGMLL. Residue Leu413 coordinates iodide. Na(+) contacts are provided by Ser416 and Phe417. Phe417 provides a ligand contact to iodide. At 438–441 the chain is on the cytoplasmic side; it reads PACN. A helical transmembrane segment spans residues 442-465; the sequence is TPGVLSGLTAGLAVSLWVAVGATL. Residues 466-520 lie on the Extracellular side of the membrane; sequence YPPGEQTMGVLPTSAAGCTNASVLPSPPGAANTSRGIPSSGMDSGRPAFADTFYA. Residues Asn485 and Asn497 are each glycosylated (N-linked (GlcNAc...) asparagine). A helical membrane pass occupies residues 521-545; sequence VSYLYYGALGTLTTMLCGALISYLT. The Cytoplasmic portion of the chain corresponds to 546–618; the sequence is GPTKRSSLGP…YLGHDVETNL (73 aa). Ser551 bears the Phosphoserine; by PKA mark. The segment covering 571–587 has biased composition (basic and acidic residues); the sequence is PKEDTTTLEDSLVKGPE. The segment at 571–618 is disordered; it reads PKEDTTTLEDSLVKGPEDIPAATKKPPGFRPEAETHPLYLGHDVETNL.

The protein belongs to the sodium:solute symporter (SSF) (TC 2.A.21) family. Monomer. In terms of processing, glycosylated.

The protein localises to the cell membrane. It localises to the cytoplasm. The enzyme catalyses iodide(out) + 2 Na(+)(out) = iodide(in) + 2 Na(+)(in). The catalysed reaction is chlorate(out) + 2 Na(+)(out) = chlorate(in) + 2 Na(+)(in). It catalyses the reaction thiocyanate(out) + 2 Na(+)(out) = thiocyanate(in) + 2 Na(+)(in). It carries out the reaction nitrate(out) + 2 Na(+)(out) = nitrate(in) + 2 Na(+)(in). The enzyme catalyses selenocyanate(out) + 2 Na(+)(out) = selenocyanate(in) + 2 Na(+)(in). Its activity is regulated as follows. Perchlorate inhibits iodide transport activity. Oxyanions inhibit iodide transport activity by blocking the binding sites for iodide and one of the sodium ions. Its function is as follows. Sodium:iodide symporter that mediates the transport of iodide into the thyroid gland. Can also mediate the transport of chlorate, thiocynate, nitrate and selenocynate. This is Sodium/iodide cotransporter (Slc5a5) from Mus musculus (Mouse).